Reading from the N-terminus, the 236-residue chain is Ribosomal RNA large subunit methyltransferase E (236 aa).

The S-adenosyl-L-methionine site is built by G76, W78, D99, D115, and D140. Residue K180 is the Proton acceptor of the active site.

It belongs to the class I-like SAM-binding methyltransferase superfamily. RNA methyltransferase RlmE family.

The protein localises to the cytoplasm. It catalyses the reaction uridine(2552) in 23S rRNA + S-adenosyl-L-methionine = 2'-O-methyluridine(2552) in 23S rRNA + S-adenosyl-L-homocysteine + H(+). Functionally, specifically methylates the uridine in position 2552 of 23S rRNA at the 2'-O position of the ribose in the fully assembled 50S ribosomal subunit. The protein is Ribosomal RNA large subunit methyltransferase E of Rhodopseudomonas palustris (strain HaA2).